Consider the following 373-residue polypeptide: Anhydro-N-acetylmuramic acid kinase (373 aa).

13 to 20 is an ATP binding site; sequence GTSMDGID.

Belongs to the anhydro-N-acetylmuramic acid kinase family.

It catalyses the reaction 1,6-anhydro-N-acetyl-beta-muramate + ATP + H2O = N-acetyl-D-muramate 6-phosphate + ADP + H(+). It participates in amino-sugar metabolism; 1,6-anhydro-N-acetylmuramate degradation. It functions in the pathway cell wall biogenesis; peptidoglycan recycling. Functionally, catalyzes the specific phosphorylation of 1,6-anhydro-N-acetylmuramic acid (anhMurNAc) with the simultaneous cleavage of the 1,6-anhydro ring, generating MurNAc-6-P. Is required for the utilization of anhMurNAc either imported from the medium or derived from its own cell wall murein, and thus plays a role in cell wall recycling. In Agrobacterium fabrum (strain C58 / ATCC 33970) (Agrobacterium tumefaciens (strain C58)), this protein is Anhydro-N-acetylmuramic acid kinase.